A 760-amino-acid polypeptide reads, in one-letter code: Xaa-Pro dipeptidyl-peptidase (760 aa).

Catalysis depends on charge relay system residues Ser-349, Asp-469, and His-499.

The protein belongs to the peptidase S15 family. As to quaternary structure, homodimer.

It is found in the cytoplasm. It carries out the reaction Hydrolyzes Xaa-Pro-|- bonds to release unblocked, N-terminal dipeptides from substrates including Ala-Pro-|-p-nitroanilide and (sequentially) Tyr-Pro-|-Phe-Pro-|-Gly-Pro-|-Ile.. Removes N-terminal dipeptides sequentially from polypeptides having unsubstituted N-termini provided that the penultimate residue is proline. This chain is Xaa-Pro dipeptidyl-peptidase, found in Streptococcus pyogenes serotype M18 (strain MGAS8232).